The primary structure comprises 277 residues: uncharacterized protein (277 aa).

The N-terminal stretch at 1–25 (MNKKSIWSKTAFGSLFLLLGTAFTA) is a signal peptide. Cys-26 carries N-palmitoyl cysteine lipidation. Cys-26 carries S-diacylglycerol cysteine lipidation.

It belongs to the MG439/MG440 family.

It is found in the cell membrane. This is an uncharacterized protein from Mycoplasma pneumoniae (strain ATCC 29342 / M129 / Subtype 1) (Mycoplasmoides pneumoniae).